The chain runs to 196 residues: Ribonuclease HII (196 aa).

In terms of domain architecture, RNase H type-2 spans 15–196 (FILAGIDEAG…RLSFTKALYK (182 aa)). Aspartate 21, glutamate 22, and aspartate 112 together coordinate a divalent metal cation.

The protein belongs to the RNase HII family. Mn(2+) serves as cofactor. The cofactor is Mg(2+).

Its subcellular location is the cytoplasm. It carries out the reaction Endonucleolytic cleavage to 5'-phosphomonoester.. In terms of biological role, endonuclease that specifically degrades the RNA of RNA-DNA hybrids. This is Ribonuclease HII from Rickettsia bellii (strain OSU 85-389).